We begin with the raw amino-acid sequence, 434 residues long: Nicotinate phosphoribosyltransferase (434 aa).

His242 is modified (phosphohistidine; by autocatalysis).

This sequence belongs to the NAPRTase family. In terms of processing, transiently phosphorylated on a His residue during the reaction cycle. Phosphorylation strongly increases the affinity for substrates and increases the rate of nicotinate D-ribonucleotide production. Dephosphorylation regenerates the low-affinity form of the enzyme, leading to product release.

The enzyme catalyses nicotinate + 5-phospho-alpha-D-ribose 1-diphosphate + ATP + H2O = nicotinate beta-D-ribonucleotide + ADP + phosphate + diphosphate. Its pathway is cofactor biosynthesis; NAD(+) biosynthesis; nicotinate D-ribonucleotide from nicotinate: step 1/1. Its function is as follows. Catalyzes the synthesis of beta-nicotinate D-ribonucleotide from nicotinate and 5-phospho-D-ribose 1-phosphate at the expense of ATP. This is Nicotinate phosphoribosyltransferase from Brucella melitensis biotype 1 (strain ATCC 23456 / CCUG 17765 / NCTC 10094 / 16M).